Reading from the N-terminus, the 333-residue chain is Terpene synthase 2 (333 aa).

Residues 82-87 (DDDLDT) carry the DDxx(x)D/E motif motif. Positions 219 to 227 (NDCVSYAKE) match the NDxxSxxxD/E motif motif.

This sequence belongs to the terpene synthase family.

It catalyses the reaction (2E,6E)-farnesyl diphosphate = (E)-beta-farnesene + diphosphate. The catalysed reaction is (2E,6E)-farnesyl diphosphate = (1S,2S,4R)-beta-elemene + diphosphate. Functionally, terpene synthase that converts its substrate farnesyl diphosphate (FPP) into the sesquiterpene (E)-beta-farnesene as major product. Is also able to convert FPP into delta-elemene, beta-elemene, (E)-beta-caryophyllene, 9-epi-(E)-caryophyllene, and a yet unidentified sesquiterpene. This is Terpene synthase 2 from Dictyostelium purpureum (Slime mold).